A 242-amino-acid polypeptide reads, in one-letter code: 2-C-methyl-D-erythritol 4-phosphate cytidylyltransferase (242 aa).

It belongs to the IspD/TarI cytidylyltransferase family. IspD subfamily.

The enzyme catalyses 2-C-methyl-D-erythritol 4-phosphate + CTP + H(+) = 4-CDP-2-C-methyl-D-erythritol + diphosphate. It functions in the pathway isoprenoid biosynthesis; isopentenyl diphosphate biosynthesis via DXP pathway; isopentenyl diphosphate from 1-deoxy-D-xylulose 5-phosphate: step 2/6. Functionally, catalyzes the formation of 4-diphosphocytidyl-2-C-methyl-D-erythritol from CTP and 2-C-methyl-D-erythritol 4-phosphate (MEP). The polypeptide is 2-C-methyl-D-erythritol 4-phosphate cytidylyltransferase (Shewanella loihica (strain ATCC BAA-1088 / PV-4)).